The sequence spans 487 residues: Transmembrane protein 161B (487 aa).

Asparagine 34 carries N-linked (GlcNAc...) asparagine glycosylation. A helical membrane pass occupies residues 107 to 127 (LVDFTVAATIVYLVTEVYYSF). A glycan (N-linked (GlcNAc...) asparagine) is linked at asparagine 135. 2 helical membrane passes run 136 to 156 (ISLV…FSLT) and 169 to 189 (SVCV…LIVT). Residue asparagine 203 is glycosylated (N-linked (GlcNAc...) asparagine). 5 helical membrane-spanning segments follow: residues 228 to 248 (FKFF…FPGL), 265 to 285 (ITQT…LLWV), 305 to 325 (LMTE…LCVL), 367 to 387 (VFYY…MLLH), and 459 to 479 (LSFL…FGLF).

Belongs to the TMEM161 family.

Its subcellular location is the cell membrane. In terms of biological role, essential for maintaining normal cardiac rhythm in the developing heart and for neonatal survival. Inhibits potassium and calcium currents in the cardiomyocytes, this assists in timely action potential repolarization and thereby maintains normal cardiac rhythm. This is Transmembrane protein 161B (Tmem161b) from Mus musculus (Mouse).